Here is a 176-residue protein sequence, read N- to C-terminus: Magnesium-dependent phosphatase 1 (176 aa).

The Nucleophile role is filled by Asp11. Asp11 contacts Mg(2+). Phosphate is bound by residues Leu12 and Asp13. Asp13 serves as a coordination point for Mg(2+). The active-site Proton donor is Asp13. Trp20 serves as a coordination point for substrate. Phosphate-binding residues include Ser69, Arg70, and Lys100. A substrate-binding site is contributed by Arg70. Asp123 serves as a coordination point for Mg(2+).

This sequence belongs to the HAD-like hydrolase superfamily. Requires Mg(2+) as cofactor.

The catalysed reaction is O-phospho-L-tyrosyl-[protein] + H2O = L-tyrosyl-[protein] + phosphate. Its activity is regulated as follows. Inhibited by vanadate and zinc, and slightly by calcium. Magnesium-dependent phosphatase which may act as a tyrosine phosphatase. The sequence is that of Magnesium-dependent phosphatase 1 (MDP1) from Homo sapiens (Human).